A 335-amino-acid polypeptide reads, in one-letter code: Beta-ketoacyl-[acyl-carrier-protein] synthase III (335 aa).

Active-site residues include Cys120 and His261. Positions 262–266 (QANER) are ACP-binding. The active site involves Asn291.

It belongs to the thiolase-like superfamily. FabH family. In terms of assembly, homodimer.

The protein localises to the cytoplasm. The catalysed reaction is malonyl-[ACP] + acetyl-CoA + H(+) = 3-oxobutanoyl-[ACP] + CO2 + CoA. It functions in the pathway lipid metabolism; fatty acid biosynthesis. Catalyzes the condensation reaction of fatty acid synthesis by the addition to an acyl acceptor of two carbons from malonyl-ACP. Catalyzes the first condensation reaction which initiates fatty acid synthesis and may therefore play a role in governing the total rate of fatty acid production. Possesses both acetoacetyl-ACP synthase and acetyl transacylase activities. Its substrate specificity determines the biosynthesis of branched-chain and/or straight-chain of fatty acids. The chain is Beta-ketoacyl-[acyl-carrier-protein] synthase III from Chlamydia pneumoniae (Chlamydophila pneumoniae).